A 492-amino-acid polypeptide reads, in one-letter code: Probable cytosol aminopeptidase (492 aa).

Lysine 248 and aspartate 253 together coordinate Mn(2+). Lysine 260 is a catalytic residue. Positions 271, 330, and 332 each coordinate Mn(2+). Arginine 334 is an active-site residue.

It belongs to the peptidase M17 family. Mn(2+) is required as a cofactor.

Its subcellular location is the cytoplasm. The catalysed reaction is Release of an N-terminal amino acid, Xaa-|-Yaa-, in which Xaa is preferably Leu, but may be other amino acids including Pro although not Arg or Lys, and Yaa may be Pro. Amino acid amides and methyl esters are also readily hydrolyzed, but rates on arylamides are exceedingly low.. It catalyses the reaction Release of an N-terminal amino acid, preferentially leucine, but not glutamic or aspartic acids.. Presumably involved in the processing and regular turnover of intracellular proteins. Catalyzes the removal of unsubstituted N-terminal amino acids from various peptides. The protein is Probable cytosol aminopeptidase (pepA) of Aeropyrum pernix (strain ATCC 700893 / DSM 11879 / JCM 9820 / NBRC 100138 / K1).